Reading from the N-terminus, the 304-residue chain is Aspartate carbamoyltransferase catalytic subunit (304 aa).

Carbamoyl phosphate contacts are provided by R49 and T50. Residue K77 participates in L-aspartate binding. Residues R99, H127, and Q130 each contribute to the carbamoyl phosphate site. 2 residues coordinate L-aspartate: R160 and R211. Carbamoyl phosphate contacts are provided by A252 and P253.

This sequence belongs to the aspartate/ornithine carbamoyltransferase superfamily. ATCase family. As to quaternary structure, heterododecamer (2C3:3R2) of six catalytic PyrB chains organized as two trimers (C3), and six regulatory PyrI chains organized as three dimers (R2).

It carries out the reaction carbamoyl phosphate + L-aspartate = N-carbamoyl-L-aspartate + phosphate + H(+). Its pathway is pyrimidine metabolism; UMP biosynthesis via de novo pathway; (S)-dihydroorotate from bicarbonate: step 2/3. Its function is as follows. Catalyzes the condensation of carbamoyl phosphate and aspartate to form carbamoyl aspartate and inorganic phosphate, the committed step in the de novo pyrimidine nucleotide biosynthesis pathway. The chain is Aspartate carbamoyltransferase catalytic subunit from Bacillus mycoides (strain KBAB4) (Bacillus weihenstephanensis).